The chain runs to 244 residues: Probable transcriptional regulatory protein CHY_1525 (244 aa).

The protein belongs to the TACO1 family.

The protein resides in the cytoplasm. The polypeptide is Probable transcriptional regulatory protein CHY_1525 (Carboxydothermus hydrogenoformans (strain ATCC BAA-161 / DSM 6008 / Z-2901)).